Here is a 113-residue protein sequence, read N- to C-terminus: Large ribosomal subunit protein uL22 (113 aa).

The protein belongs to the universal ribosomal protein uL22 family. In terms of assembly, part of the 50S ribosomal subunit.

Its function is as follows. This protein binds specifically to 23S rRNA; its binding is stimulated by other ribosomal proteins, e.g. L4, L17, and L20. It is important during the early stages of 50S assembly. It makes multiple contacts with different domains of the 23S rRNA in the assembled 50S subunit and ribosome. The globular domain of the protein is located near the polypeptide exit tunnel on the outside of the subunit, while an extended beta-hairpin is found that lines the wall of the exit tunnel in the center of the 70S ribosome. The chain is Large ribosomal subunit protein uL22 from Oceanobacillus iheyensis (strain DSM 14371 / CIP 107618 / JCM 11309 / KCTC 3954 / HTE831).